An 871-amino-acid polypeptide reads, in one-letter code: Alanine--tRNA ligase (871 aa).

Zn(2+)-binding residues include His561, His565, Cys665, and His669.

Belongs to the class-II aminoacyl-tRNA synthetase family. The cofactor is Zn(2+).

The protein localises to the cytoplasm. The enzyme catalyses tRNA(Ala) + L-alanine + ATP = L-alanyl-tRNA(Ala) + AMP + diphosphate. In terms of biological role, catalyzes the attachment of alanine to tRNA(Ala) in a two-step reaction: alanine is first activated by ATP to form Ala-AMP and then transferred to the acceptor end of tRNA(Ala). Also edits incorrectly charged Ser-tRNA(Ala) and Gly-tRNA(Ala) via its editing domain. The chain is Alanine--tRNA ligase from Dehalococcoides mccartyi (strain ATCC BAA-2266 / KCTC 15142 / 195) (Dehalococcoides ethenogenes (strain 195)).